The chain runs to 450 residues: MRRHAIILAAGKGTRMKSKKYKVLHEVAGKPMVEHVLESVKGSGVDQVVTIVGHGAESVKGHLGERSLYSFQEEQLGTAHAVQMAKSHLEDKEGTTIVVCGDTPLITKETLETLIAHHEDANAQATVLSASIQQPYGYGRIVRNASGRLERIVEEKDATQAEKDINEISSGIFAFNNKTLFEKLTQVKNDNAQGEYYLPDVLSLILNDGGIVEVYRTNDVEEIMGVNDRVMLSQAEKAMQRRTNHYHMLNGVTIIDPDSTYIGPDVTIGSDTVIEPGVRINGRTEIGEDVVIGQYSEINNSTIENGACIQQSVVNDASVGANTKVGPFAQLRPGAQLGADVKVGNFVEIKKADLKDGAKVSHLSYIGDAVIGERTNIGCGTITVNYDGENKFKTIVGKDSFVGCNVNLVAPVTIGDDVLVAAGSTITDDVPNDSLAVARARQTTKEGYRK.

The segment at 1–229 (MRRHAIILAA…VEEIMGVNDR (229 aa)) is pyrophosphorylase. UDP-N-acetyl-alpha-D-glucosamine is bound by residues 8–11 (LAAG), Lys-22, Gln-72, and 77–78 (GT). Residue Asp-102 coordinates Mg(2+). Residues Gly-139, Glu-154, and Asn-227 each contribute to the UDP-N-acetyl-alpha-D-glucosamine site. Residue Asn-227 coordinates Mg(2+). A linker region spans residues 230–250 (VMLSQAEKAMQRRTNHYHMLN). The interval 251–450 (GVTIIDPDST…RQTTKEGYRK (200 aa)) is N-acetyltransferase. UDP-N-acetyl-alpha-D-glucosamine is bound by residues Arg-332 and Lys-350. His-362 acts as the Proton acceptor in catalysis. Residues Tyr-365 and Asn-376 each coordinate UDP-N-acetyl-alpha-D-glucosamine. Residues 385–386 (NY), Ala-422, and Arg-439 contribute to the acetyl-CoA site.

In the N-terminal section; belongs to the N-acetylglucosamine-1-phosphate uridyltransferase family. The protein in the C-terminal section; belongs to the transferase hexapeptide repeat family. As to quaternary structure, homotrimer. Mg(2+) serves as cofactor.

Its subcellular location is the cytoplasm. The catalysed reaction is alpha-D-glucosamine 1-phosphate + acetyl-CoA = N-acetyl-alpha-D-glucosamine 1-phosphate + CoA + H(+). It carries out the reaction N-acetyl-alpha-D-glucosamine 1-phosphate + UTP + H(+) = UDP-N-acetyl-alpha-D-glucosamine + diphosphate. Its pathway is nucleotide-sugar biosynthesis; UDP-N-acetyl-alpha-D-glucosamine biosynthesis; N-acetyl-alpha-D-glucosamine 1-phosphate from alpha-D-glucosamine 6-phosphate (route II): step 2/2. It participates in nucleotide-sugar biosynthesis; UDP-N-acetyl-alpha-D-glucosamine biosynthesis; UDP-N-acetyl-alpha-D-glucosamine from N-acetyl-alpha-D-glucosamine 1-phosphate: step 1/1. It functions in the pathway bacterial outer membrane biogenesis; LPS lipid A biosynthesis. Functionally, catalyzes the last two sequential reactions in the de novo biosynthetic pathway for UDP-N-acetylglucosamine (UDP-GlcNAc). The C-terminal domain catalyzes the transfer of acetyl group from acetyl coenzyme A to glucosamine-1-phosphate (GlcN-1-P) to produce N-acetylglucosamine-1-phosphate (GlcNAc-1-P), which is converted into UDP-GlcNAc by the transfer of uridine 5-monophosphate (from uridine 5-triphosphate), a reaction catalyzed by the N-terminal domain. This is Bifunctional protein GlmU from Staphylococcus aureus (strain USA300).